The sequence spans 144 residues: Large ribosomal subunit protein uL13 (144 aa).

The protein belongs to the universal ribosomal protein uL13 family. As to quaternary structure, part of the 50S ribosomal subunit.

Its function is as follows. This protein is one of the early assembly proteins of the 50S ribosomal subunit, although it is not seen to bind rRNA by itself. It is important during the early stages of 50S assembly. This is Large ribosomal subunit protein uL13 from Blochmanniella pennsylvanica (strain BPEN).